The primary structure comprises 227 residues: Lipoprotein-releasing system ATP-binding protein LolD (227 aa).

In terms of domain architecture, ABC transporter spans 6–227 (LKIEGLRKTY…HLEDGVLVER (222 aa)). Residue 43-50 (APSGAGKS) participates in ATP binding.

The protein belongs to the ABC transporter superfamily. Lipoprotein translocase (TC 3.A.1.125) family. As to quaternary structure, the complex is composed of two ATP-binding proteins (LolD) and two transmembrane proteins (LolC and LolE).

It is found in the cell inner membrane. Part of the ABC transporter complex LolCDE involved in the translocation of mature outer membrane-directed lipoproteins, from the inner membrane to the periplasmic chaperone, LolA. Responsible for the formation of the LolA-lipoprotein complex in an ATP-dependent manner. This is Lipoprotein-releasing system ATP-binding protein LolD from Ruegeria sp. (strain TM1040) (Silicibacter sp.).